Consider the following 333-residue polypeptide: Adenosine deaminase (333 aa).

Residues histidine 12 and histidine 14 each contribute to the Zn(2+) site. Substrate-binding residues include histidine 14, aspartate 16, and glycine 170. Histidine 197 is a Zn(2+) binding site. Glutamate 200 acts as the Proton donor in catalysis. Residue aspartate 278 participates in Zn(2+) binding. Substrate is bound at residue aspartate 279.

This sequence belongs to the metallo-dependent hydrolases superfamily. Adenosine and AMP deaminases family. Adenosine deaminase subfamily. Requires Zn(2+) as cofactor.

The enzyme catalyses adenosine + H2O + H(+) = inosine + NH4(+). It carries out the reaction 2'-deoxyadenosine + H2O + H(+) = 2'-deoxyinosine + NH4(+). Catalyzes the hydrolytic deamination of adenosine and 2-deoxyadenosine. The polypeptide is Adenosine deaminase (Salmonella schwarzengrund (strain CVM19633)).